A 238-amino-acid polypeptide reads, in one-letter code: Lactate utilization protein A (238 aa).

The protein belongs to the LutA/YkgE family.

Its function is as follows. Is involved in L-lactate degradation and allows cells to grow with lactate as the sole carbon source. This is Lactate utilization protein A from Bacillus licheniformis (strain ATCC 14580 / DSM 13 / JCM 2505 / CCUG 7422 / NBRC 12200 / NCIMB 9375 / NCTC 10341 / NRRL NRS-1264 / Gibson 46).